The primary structure comprises 473 residues: MAP kinase-activated protein kinase 5 (473 aa).

The 283-residue stretch at 22-304 folds into the Protein kinase domain; that stretch reads INWTQKLGAG…IEGVLDHPWL (283 aa). ATP is bound by residues 28–36 and K51; that span reads LGAGISGPV. Residue S115 is modified to Phosphoserine; by PKA. The active-site Proton acceptor is D148. Residue T182 is modified to Phosphothreonine; by MAPK11, MAPK14, MAPK4, MAPK6 and PKA. Phosphoserine is present on residues S212 and S354. The stretch at 409–440 forms a coiled coil; it reads ENEDEKLNEVMQEAWKYNRECKLLRDALQSFS.

The protein belongs to the protein kinase superfamily. CAMK Ser/Thr protein kinase family. As to quaternary structure, interacts with SQSTM1. Interacts with ERK3/MAPK6 and ERK4/MAPK4 (via FRIEDE motif); the interaction is direct. Interacts with YWHAE; the interaction prevents phosphorylation of HSP27/HSPB1 leading to disrupt F-actin polymerization. Phosphorylated on Thr-182 ERK3/MAPK6 or ERK4/MAPK4; which is the regulatory phosphorylation site and is located on the T-loop/loop 12, leading to activation. Phosphorylation at Thr-182 by p38-alpha/MAPK14, p38-beta/MAPK11 is subject to debate. Phosphorylated at Ser-115 by PKA/PRKACA, leading to localization to the cytoplasm. Autophosphorylated. As to expression, expressed ubiquitously.

The protein localises to the cytoplasm. It localises to the nucleus. It catalyses the reaction L-seryl-[protein] + ATP = O-phospho-L-seryl-[protein] + ADP + H(+). It carries out the reaction L-threonyl-[protein] + ATP = O-phospho-L-threonyl-[protein] + ADP + H(+). Activated following phosphorylation at Thr-182 by p38-alpha/MAPK14, p38-beta/MAPK11, ERK2/MAPK1, ERK3/MAPK6, and ERK4/MAPK4. Activated by stress-related extracellular stimuli; such as H(2)O(2), arsenite, anisomycin TNF alpha and also PMA and the calcium ionophore A23187; but to a lesser extent. In vitro, activated by SQSTM1. Inhibited by diterpenoid alkaloid noroxoaconitine. Tumor suppressor serine/threonine-protein kinase involved in mTORC1 signaling and post-transcriptional regulation. Phosphorylates FOXO3, ERK3/MAPK6, ERK4/MAPK4, HSP27/HSPB1, p53/TP53 and RHEB. Acts as a tumor suppressor by mediating Ras-induced senescence and phosphorylating p53/TP53. Involved in post-transcriptional regulation of MYC by mediating phosphorylation of FOXO3: phosphorylation of FOXO3 leads to promote nuclear localization of FOXO3, enabling expression of miR-34b and miR-34c, 2 post-transcriptional regulators of MYC that bind to the 3'UTR of MYC transcript and prevent MYC translation. Acts as a negative regulator of mTORC1 signaling by mediating phosphorylation and inhibition of RHEB. Part of the atypical MAPK signaling via its interaction with ERK3/MAPK6 or ERK4/MAPK4: the precise role of the complex formed with ERK3/MAPK6 or ERK4/MAPK4 is still unclear, but the complex follows a complex set of phosphorylation events: upon interaction with atypical MAPK (ERK3/MAPK6 or ERK4/MAPK4), ERK3/MAPK6 (or ERK4/MAPK4) is phosphorylated and then mediates phosphorylation and activation of MAPKAPK5, which in turn phosphorylates ERK3/MAPK6 (or ERK4/MAPK4). Mediates phosphorylation of HSP27/HSPB1 in response to PKA/PRKACA stimulation, inducing F-actin rearrangement. In Mus musculus (Mouse), this protein is MAP kinase-activated protein kinase 5 (Mapkapk5).